The following is a 248-amino-acid chain: Phosphoribosyl isomerase A (248 aa).

The Proton acceptor role is filled by aspartate 14. The active-site Proton donor is the aspartate 133.

This sequence belongs to the HisA/HisF family.

Its subcellular location is the cytoplasm. The catalysed reaction is 1-(5-phospho-beta-D-ribosyl)-5-[(5-phospho-beta-D-ribosylamino)methylideneamino]imidazole-4-carboxamide = 5-[(5-phospho-1-deoxy-D-ribulos-1-ylimino)methylamino]-1-(5-phospho-beta-D-ribosyl)imidazole-4-carboxamide. It carries out the reaction N-(5-phospho-beta-D-ribosyl)anthranilate = 1-(2-carboxyphenylamino)-1-deoxy-D-ribulose 5-phosphate. The protein operates within amino-acid biosynthesis; L-histidine biosynthesis; L-histidine from 5-phospho-alpha-D-ribose 1-diphosphate: step 4/9. It functions in the pathway amino-acid biosynthesis; L-tryptophan biosynthesis; L-tryptophan from chorismate: step 3/5. Involved in both the histidine and tryptophan biosynthetic pathways. In Mycobacterium sp. (strain JLS), this protein is Phosphoribosyl isomerase A.